An 878-amino-acid polypeptide reads, in one-letter code: Ecdysone receptor (878 aa).

Disordered stretches follow at residues 1-27 (MKRR…SSSN) and 209-254 (GLGM…SKKG). Positions 1–263 (MKRRWSNNGG…GPAPRVQEEL (263 aa)) are modulating. 2 NR C4-type zinc fingers span residues 264 to 284 (CLVC…CEGC) and 300 to 324 (CKFG…LKKC). Positions 264-336 (CLVCGDRASG…VGMRPECVVP (73 aa)) form a DNA-binding region, nuclear receptor. The interval 344–374 (RREKKAQKEKDKMTTSPSSQHGGNGSLASGG) is disordered. Positions 365–374 (GGNGSLASGG) are enriched in gly residues. The NR LBD domain occupies 419 to 654 (NQLAVIYKLI…FLEEIWDVHA (236 aa)). Composition is skewed to low complexity over residues 698-709 (TSAAAAAAQHQP) and 728-759 (QTQP…QLQP). Positions 698 to 759 (TSAAAAAAQH…QPQLQTQLQP (62 aa)) are disordered.

This sequence belongs to the nuclear hormone receptor family. NR1 subfamily. Heterodimer of USP and ECR. Only the heterodimer is capable of high-affinity binding to ecdysone. Interacts with trr in an ecdysone-dependent manner. Upon ecdysone stimulation, interacts with Nup98. As to expression, isoform B1 predominates over isoform A in larval tissues, imaginal histoblast nests and midgut islands. Isoform A predominates over B1 in imaginal disks, and the larval prothoracic gland.

The protein resides in the nucleus. Its function is as follows. Receptor for ecdysone. Binds to ecdysone response elements (ECRES) following ecdysone-binding, and recruitment of a complex containing the histone methyltransferase trr, leads to activate transcription of target genes. The chain is Ecdysone receptor (EcR) from Drosophila melanogaster (Fruit fly).